Consider the following 132-residue polypeptide: Fluoride-specific ion channel FluC 2 (132 aa).

4 consecutive transmembrane segments (helical) span residues 12 to 32 (LTEL…RWQL), 41 to 61 (LLVN…PVAP), 65 to 85 (LLVG…MLAA), and 96 to 116 (AALG…ALGF). Na(+) is bound by residues Gly73 and Thr76.

Belongs to the fluoride channel Fluc/FEX (TC 1.A.43) family.

The protein localises to the cell inner membrane. It carries out the reaction fluoride(in) = fluoride(out). With respect to regulation, na(+) is not transported, but it plays an essential structural role and its presence is essential for fluoride channel function. Its function is as follows. Fluoride-specific ion channel. Important for reducing fluoride concentration in the cell, thus reducing its toxicity. In Parasynechococcus marenigrum (strain WH8102), this protein is Fluoride-specific ion channel FluC 2.